The chain runs to 547 residues: Cytochrome P450 monooxygenase 81 (547 aa).

The next 2 helical transmembrane spans lie at 6–23 and 106–124; these read IPTQ…LFLL and AFFA…ATAG. Cys-483 is a heme binding site. N-linked (GlcNAc...) asparagine glycosylation is found at Asn-503 and Asn-516.

Belongs to the cytochrome P450 family. The cofactor is heme.

The protein localises to the membrane. Its pathway is secondary metabolite biosynthesis. Functionally, cytochrome P450 monooxygenase that is able to use dehydroabietic acid as a substrate for oxidation. The chain is Cytochrome P450 monooxygenase 81 from Postia placenta (strain ATCC 44394 / Madison 698-R) (Brown rot fungus).